Reading from the N-terminus, the 277-residue chain is 3-methyl-2-oxobutanoate hydroxymethyltransferase (277 aa).

Mg(2+) contacts are provided by aspartate 53 and aspartate 96. 3-methyl-2-oxobutanoate is bound by residues 53–54 (DS), aspartate 96, and lysine 126. Glutamate 128 provides a ligand contact to Mg(2+). The Proton acceptor role is filled by glutamate 195.

This sequence belongs to the PanB family. As to quaternary structure, homodecamer; pentamer of dimers. The cofactor is Mg(2+).

Its subcellular location is the cytoplasm. The catalysed reaction is 3-methyl-2-oxobutanoate + (6R)-5,10-methylene-5,6,7,8-tetrahydrofolate + H2O = 2-dehydropantoate + (6S)-5,6,7,8-tetrahydrofolate. Its pathway is cofactor biosynthesis; (R)-pantothenate biosynthesis; (R)-pantoate from 3-methyl-2-oxobutanoate: step 1/2. Its function is as follows. Catalyzes the reversible reaction in which hydroxymethyl group from 5,10-methylenetetrahydrofolate is transferred onto alpha-ketoisovalerate to form ketopantoate. In Pelodictyon phaeoclathratiforme (strain DSM 5477 / BU-1), this protein is 3-methyl-2-oxobutanoate hydroxymethyltransferase.